We begin with the raw amino-acid sequence, 404 residues long: Retrotransposable element SLACS 45 kDa protein (404 aa).

Polar residues-rich tracts occupy residues Met-1–Gln-11 and Pro-29–Val-41. Disordered regions lie at residues Met-1 to Ile-62, Lys-86 to Pro-111, Leu-134 to Ala-251, Cys-317 to Ser-341, and Pro-369 to Pro-404. The span at Val-98–Pro-111 shows a compositional bias: basic and acidic residues. A compositionally biased stretch (polar residues) spans Thr-141–Val-151. The segment at Cys-300–His-321 adopts a C2H2-type zinc-finger fold. Positions His-395 to Pro-404 are enriched in basic and acidic residues.

The sequence is that of Retrotransposable element SLACS 45 kDa protein from Trypanosoma brucei gambiense.